A 238-amino-acid polypeptide reads, in one-letter code: uncharacterized protein (238 aa).

7 consecutive transmembrane segments (helical) span residues 19 to 39, 64 to 84, 85 to 105, 112 to 132, 141 to 161, 176 to 196, and 218 to 238; these read FIYGMLLANPVWAHIFLLLGW, WSVIYFAAAVIFAIPALIYNW, QVLYFMFAMLPFVAVNIYFTK, LWNDLAGILIFALAGMGSYYF, ILWVAIYPTLFFIGTTLYVKS, VIFHLLCALIFVVSQQFILAL, and VGLIEFAITAVFFILLLVATL.

It to B.subtilis YwiC.

The protein localises to the cell membrane. This is an uncharacterized protein from Haemophilus influenzae (strain ATCC 51907 / DSM 11121 / KW20 / Rd).